Here is a 902-residue protein sequence, read N- to C-terminus: Protein translocase subunit SecA (902 aa).

ATP is bound by residues Q87, G105–T109, and D512. Positions R850–G902 are disordered. Over residues K853–S868 the composition is skewed to polar residues. 4 residues coordinate Zn(2+): C886, C888, C897, and H898. The span at K892–G902 shows a compositional bias: basic residues.

The protein belongs to the SecA family. Monomer and homodimer. Part of the essential Sec protein translocation apparatus which comprises SecA, SecYEG and auxiliary proteins SecDF-YajC and YidC. The cofactor is Zn(2+).

Its subcellular location is the cell inner membrane. The protein localises to the cytoplasm. The catalysed reaction is ATP + H2O + cellular proteinSide 1 = ADP + phosphate + cellular proteinSide 2.. In terms of biological role, part of the Sec protein translocase complex. Interacts with the SecYEG preprotein conducting channel. Has a central role in coupling the hydrolysis of ATP to the transfer of proteins into and across the cell membrane, serving both as a receptor for the preprotein-SecB complex and as an ATP-driven molecular motor driving the stepwise translocation of polypeptide chains across the membrane. The chain is Protein translocase subunit SecA from Proteus mirabilis (strain HI4320).